A 345-amino-acid polypeptide reads, in one-letter code: Phosphoribosylformylglycinamidine cyclo-ligase (345 aa).

This sequence belongs to the AIR synthase family.

Its subcellular location is the cytoplasm. The catalysed reaction is 2-formamido-N(1)-(5-O-phospho-beta-D-ribosyl)acetamidine + ATP = 5-amino-1-(5-phospho-beta-D-ribosyl)imidazole + ADP + phosphate + H(+). It participates in purine metabolism; IMP biosynthesis via de novo pathway; 5-amino-1-(5-phospho-D-ribosyl)imidazole from N(2)-formyl-N(1)-(5-phospho-D-ribosyl)glycinamide: step 2/2. This Histophilus somni (strain 129Pt) (Haemophilus somnus) protein is Phosphoribosylformylglycinamidine cyclo-ligase.